An 856-amino-acid chain; its full sequence is Glucans biosynthesis glucosyltransferase H (856 aa).

6 consecutive transmembrane segments (helical) span residues Ile144–Met164, Ile198–Met218, Val517–Leu537, Leu574–Trp594, Thr608–Phe628, and Phe684–Ile704.

The protein belongs to the glycosyltransferase 2 family. OpgH subfamily.

Its subcellular location is the cell inner membrane. Its pathway is glycan metabolism; osmoregulated periplasmic glucan (OPG) biosynthesis. Its function is as follows. Involved in the biosynthesis of osmoregulated periplasmic glucans (OPGs). The protein is Glucans biosynthesis glucosyltransferase H of Pseudomonas fluorescens (strain ATCC BAA-477 / NRRL B-23932 / Pf-5).